Consider the following 127-residue polypeptide: Small ribosomal subunit protein uS11 (127 aa).

This sequence belongs to the universal ribosomal protein uS11 family. In terms of assembly, part of the 30S ribosomal subunit. Interacts with proteins S7 and S18. Binds to IF-3.

Functionally, located on the platform of the 30S subunit, it bridges several disparate RNA helices of the 16S rRNA. Forms part of the Shine-Dalgarno cleft in the 70S ribosome. This is Small ribosomal subunit protein uS11 from Chlorobium limicola (strain DSM 245 / NBRC 103803 / 6330).